Here is a 197-residue protein sequence, read N- to C-terminus: Prefoldin subunit 3 (197 aa).

Alanine 2 is modified (N-acetylalanine). An N6-acetyllysine modification is found at lysine 59.

It belongs to the prefoldin subunit alpha family. Heterohexamer of two PFD-alpha type and four PFD-beta type subunits. Binds to the C-terminal part of VHL. In terms of tissue distribution, ubiquitous.

The protein localises to the cytoplasm. It is found in the nucleus. In terms of biological role, binds specifically to cytosolic chaperonin (c-CPN) and transfers target proteins to it. Binds to nascent polypeptide chain and promotes folding in an environment in which there are many competing pathways for nonnative proteins. This is Prefoldin subunit 3 (VBP1) from Homo sapiens (Human).